A 160-amino-acid chain; its full sequence is Cytochrome b6-f complex subunit 4 (160 aa).

Helical transmembrane passes span 36–56 (LLYI…GLAV), 95–115 (LLGV…PFLE), and 131–151 (TVFL…ALPI).

The protein belongs to the cytochrome b family. PetD subfamily. In terms of assembly, the 4 large subunits of the cytochrome b6-f complex are cytochrome b6, subunit IV (17 kDa polypeptide, petD), cytochrome f and the Rieske protein, while the 4 small subunits are petG, petL, petM and petN. The complex functions as a dimer.

The protein localises to the plastid. The protein resides in the chloroplast thylakoid membrane. Component of the cytochrome b6-f complex, which mediates electron transfer between photosystem II (PSII) and photosystem I (PSI), cyclic electron flow around PSI, and state transitions. This Physcomitrium patens (Spreading-leaved earth moss) protein is Cytochrome b6-f complex subunit 4.